The following is a 309-amino-acid chain: Taste receptor type 2 member 66 (309 aa).

Residue methionine 1 is a topological domain, extracellular. The helical transmembrane segment at 2–22 (ITFLPIIFSILIVVTFVIGNF) threads the bilayer. Residues 23–46 (ANGFIALANSIEWFKRQKISFADQ) lie on the Cytoplasmic side of the membrane. A helical transmembrane segment spans residues 47–67 (ILTALAVPRVGLLWVLLLNWY). At 68–86 (ATELNPAFYSIEVRITAYN) the chain is on the extracellular side. A helical transmembrane segment spans residues 87–107 (LWAVINHFSNWLATSLSIFYL). Topologically, residues 108-126 (LKIANFSNLIFLRLKRRVK) are cytoplasmic. The chain crosses the membrane as a helical span at residues 127 to 147 (SVVLVILLGPLLFLVCHLFVI). Residues 148 to 178 (NMNQIIWTKEYEGNMTWKIKLRSAMYLSNTT) are Extracellular-facing. 2 N-linked (GlcNAc...) asparagine glycosylation sites follow: asparagine 161 and asparagine 176. A helical transmembrane segment spans residues 179 to 199 (VTILANLVPFTVTLISFLLLV). Residues 200–229 (CSLCKHLKKMQLHGKGSQDPSTKVHIKALQ) lie on the Cytoplasmic side of the membrane. A helical membrane pass occupies residues 230-250 (TVISFLLLCAIYFVSVIISVW). The Extracellular segment spans residues 251–259 (SFKNLENKP). A helical transmembrane segment spans residues 260 to 280 (VFMFCQAIGFSCSSAHPFILI). Residues 281 to 309 (WGNKKLKQPFLSVLWQMRYWVKGEKPSSS) lie on the Cytoplasmic side of the membrane.

The protein belongs to the G-protein coupled receptor T2R family.

Its subcellular location is the membrane. Its function is as follows. Receptor that may play a role in the perception of bitterness and is gustducin-linked. May play a role in sensing the chemical composition of the gastrointestinal content. The activity of this receptor may stimulate alpha gustducin, mediate PLC-beta-2 activation and lead to the gating of TRPM5. The protein is Taste receptor type 2 member 66 (TAS2R66) of Pan paniscus (Pygmy chimpanzee).